A 284-amino-acid chain; its full sequence is Probable protein phosphatase 2C 41 (284 aa).

The 248-residue stretch at Ser35–Phe282 folds into the PPM-type phosphatase domain. Mn(2+)-binding residues include Asp72, Gly73, Asp234, and Asp273.

Belongs to the PP2C family. The cofactor is Mg(2+). Requires Mn(2+) as cofactor.

The catalysed reaction is O-phospho-L-seryl-[protein] + H2O = L-seryl-[protein] + phosphate. It carries out the reaction O-phospho-L-threonyl-[protein] + H2O = L-threonyl-[protein] + phosphate. The protein is Probable protein phosphatase 2C 41 of Oryza sativa subsp. japonica (Rice).